A 243-amino-acid chain; its full sequence is tRNA (guanine-N(1)-)-methyltransferase (243 aa).

S-adenosyl-L-methionine contacts are provided by residues Gly-112 and 131–136 (LGDYVL).

This sequence belongs to the RNA methyltransferase TrmD family. As to quaternary structure, homodimer.

It localises to the cytoplasm. The enzyme catalyses guanosine(37) in tRNA + S-adenosyl-L-methionine = N(1)-methylguanosine(37) in tRNA + S-adenosyl-L-homocysteine + H(+). Its function is as follows. Specifically methylates guanosine-37 in various tRNAs. The sequence is that of tRNA (guanine-N(1)-)-methyltransferase from Leuconostoc mesenteroides subsp. mesenteroides (strain ATCC 8293 / DSM 20343 / BCRC 11652 / CCM 1803 / JCM 6124 / NCDO 523 / NBRC 100496 / NCIMB 8023 / NCTC 12954 / NRRL B-1118 / 37Y).